We begin with the raw amino-acid sequence, 80 residues long: Conotoxin SmIVA (80 aa).

A signal peptide spans 1-21 (MGMRMMFTVFLLVVLATTVVS). Positions 22-38 (IPSDRASDGRNAAVNER) are excised as a propeptide. Position 39 is a pyrrolidone carboxylic acid (Gln-39). Ser-45 is a glycosylation site (O-linked (HexNAc...) serine). 4 positions are modified to 4-hydroxyproline: Pro-55, Pro-60, Pro-70, and Pro-72. Ser-75 is modified (serine amide). Residues 76–80 (GRRND) constitute a propeptide that is removed on maturation.

Belongs to the conotoxin A superfamily. Contains 3 disulfide bonds. As to expression, expressed by the venom duct.

It is found in the secreted. Its function is as follows. Neurotoxin with probable activity on sodium channel. Induces intense repetitive firing of the frog neuromuscular junction, leading to a tetanic contracture in muscle fiber (spastic paralysis). In vivo, shows the same effect as the whole venom when injected on fish prey. This is Conotoxin SmIVA from Conus stercusmuscarum (Fly-specked cone).